The chain runs to 293 residues: Ribosomal RNA small subunit methyltransferase H (293 aa).

S-adenosyl-L-methionine contacts are provided by residues 34–36 (GGH), Asp-54, Leu-86, Asp-101, and Gln-108.

The protein belongs to the methyltransferase superfamily. RsmH family.

It localises to the cytoplasm. The enzyme catalyses cytidine(1402) in 16S rRNA + S-adenosyl-L-methionine = N(4)-methylcytidine(1402) in 16S rRNA + S-adenosyl-L-homocysteine + H(+). Specifically methylates the N4 position of cytidine in position 1402 (C1402) of 16S rRNA. The polypeptide is Ribosomal RNA small subunit methyltransferase H (Elusimicrobium minutum (strain Pei191)).